Reading from the N-terminus, the 206-residue chain is High frequency lysogenization protein HflD homolog (206 aa).

Belongs to the HflD family.

The protein resides in the cytoplasm. Its subcellular location is the cell inner membrane. The sequence is that of High frequency lysogenization protein HflD homolog from Pseudomonas savastanoi pv. phaseolicola (strain 1448A / Race 6) (Pseudomonas syringae pv. phaseolicola (strain 1448A / Race 6)).